Consider the following 348-residue polypeptide: Serine/threonine-protein kinase SBK2 (348 aa).

Positions 1–25 are disordered; the sequence is MPGKQSEEGPAEAGASEDSEEEGLG. The Protein kinase domain maps to 62–330; it reads YEEVRPLGQG…IREHLGRPWR (269 aa). ATP contacts are provided by residues 68–76 and lysine 91; that span reads LGQGCYGRV. Catalysis depends on aspartate 183, which acts as the Proton acceptor.

Belongs to the protein kinase superfamily. Ser/Thr protein kinase family. STKL subfamily.

The catalysed reaction is L-seryl-[protein] + ATP = O-phospho-L-seryl-[protein] + ADP + H(+). The enzyme catalyses L-threonyl-[protein] + ATP = O-phospho-L-threonyl-[protein] + ADP + H(+). The polypeptide is Serine/threonine-protein kinase SBK2 (SBK2) (Homo sapiens (Human)).